Reading from the N-terminus, the 239-residue chain is MKISILTLFPEMFSIFDHSIIGRARENNIVDLETLNIRDYTLNKHKKVDDYPYGGGAGMVMAPQPIVDTIRDAKLSNKGKVVFLGPRGKTFNQEIAKELSKEEGLIFLCGHYEGIDERVYKHIDMEISLGDFVLTGGEMAAIPVIDCILRLIPGVLGKEESFMEESFYNGLLEYPQYTRPEEFEGDKVPEILLSGHHENIRKWRRLKSLEVTKKIRPDLYKKITLTKEDIKILKNKNNK.

S-adenosyl-L-methionine-binding positions include G110 and 129 to 134; that span reads LGDFVL.

It belongs to the RNA methyltransferase TrmD family. As to quaternary structure, homodimer.

It localises to the cytoplasm. It catalyses the reaction guanosine(37) in tRNA + S-adenosyl-L-methionine = N(1)-methylguanosine(37) in tRNA + S-adenosyl-L-homocysteine + H(+). Functionally, specifically methylates guanosine-37 in various tRNAs. The polypeptide is tRNA (guanine-N(1)-)-methyltransferase (Clostridium beijerinckii (strain ATCC 51743 / NCIMB 8052) (Clostridium acetobutylicum)).